A 259-amino-acid chain; its full sequence is Global transcriptional regulator CodY (259 aa).

The interval 1–155 (MNLLEKTRKI…GATVVGMEIL (155 aa)) is GAF domain. A DNA-binding region (H-T-H motif) is located at residues 203–222 (ASKIADRVGITRSVIVNALR). Serine 215 carries the post-translational modification Phosphoserine.

It belongs to the CodY family.

The protein resides in the cytoplasm. DNA-binding global transcriptional regulator which is involved in the adaptive response to starvation and acts by directly or indirectly controlling the expression of numerous genes in response to nutrient availability. During rapid exponential growth, CodY is highly active and represses genes whose products allow adaptation to nutrient depletion. The protein is Global transcriptional regulator CodY of Geobacillus kaustophilus (strain HTA426).